The primary structure comprises 449 residues: Putative F-box/FBD/LRR-repeat protein At5g62970 (449 aa).

The region spanning 2–50 (DKISGFSDDELLVKILSFLPFKFAITTSVLSKQWKFLWMRVPKLEYDED) is the F-box domain. LRR repeat units follow at residues 27–52 (TTSV…EDSM), 81–107 (GHRM…RLKF), 158–185 (TLKL…HLER), 186–211 (VTYG…VVEL), 252–279 (YFKL…NITA), and 328–354 (IHNA…EFDE). The 51-residue stretch at 368–418 (FWNQPNSVPQCLLSTLQTFEWSGYPGSVQGKDLATYILRKSRQLKIATISI) folds into the FBD domain.

This Arabidopsis thaliana (Mouse-ear cress) protein is Putative F-box/FBD/LRR-repeat protein At5g62970.